A 90-amino-acid chain; its full sequence is DNA-binding protein HU-1 (90 aa).

Thr-4 carries the phosphothreonine modification.

Belongs to the bacterial histone-like protein family. In terms of assembly, homodimer.

Histone-like DNA-binding protein which is capable of wrapping DNA to stabilize it, and thus to prevent its denaturation under extreme environmental conditions. The chain is DNA-binding protein HU-1 (hup2) from Halalkalibacterium halodurans (strain ATCC BAA-125 / DSM 18197 / FERM 7344 / JCM 9153 / C-125) (Bacillus halodurans).